An 892-amino-acid polypeptide reads, in one-letter code: Histone deacetylase 4 (892 aa).

The disordered stretch occupies residues 145–225; it reads NGNLSNLSVP…MSNVNGHDNS (81 aa). Composition is skewed to polar residues over residues 171-192 and 208-222; these read SAPT…ISQL and ESNS…VNGH. The interval 481–822 is histone deacetylase; sequence STGLGYDPLM…VQALIGESDD (342 aa). Histidine 628 is a catalytic residue.

The protein belongs to the histone deacetylase family. HD type 2 subfamily.

The protein localises to the nucleus. The enzyme catalyses N(6)-acetyl-L-lysyl-[histone] + H2O = L-lysyl-[histone] + acetate. In terms of biological role, responsible for the deacetylation of lysine residues on the N-terminal part of the core histones (H2A, H2B, H3 and H4). Histone deacetylation gives a tag for epigenetic repression and plays an important role in transcriptional regulation, cell cycle progression and developmental events. Histone deacetylases act via the formation of large multiprotein complexes. The sequence is that of Histone deacetylase 4 (hda-4) from Caenorhabditis briggsae.